We begin with the raw amino-acid sequence, 204 residues long: 3-isopropylmalate dehydratase small subunit (204 aa).

It belongs to the LeuD family. LeuD type 1 subfamily. In terms of assembly, heterodimer of LeuC and LeuD.

It catalyses the reaction (2R,3S)-3-isopropylmalate = (2S)-2-isopropylmalate. The protein operates within amino-acid biosynthesis; L-leucine biosynthesis; L-leucine from 3-methyl-2-oxobutanoate: step 2/4. Catalyzes the isomerization between 2-isopropylmalate and 3-isopropylmalate, via the formation of 2-isopropylmaleate. The sequence is that of 3-isopropylmalate dehydratase small subunit from Clavibacter michiganensis subsp. michiganensis (strain NCPPB 382).